A 498-amino-acid polypeptide reads, in one-letter code: Glycerol kinase (498 aa).

Position 14 (T14) interacts with ADP. Residues T14 and T15 each coordinate ATP. T14 contacts sn-glycerol 3-phosphate. An ADP-binding site is contributed by R18. Residues R84, E85, Y136, and D246 each coordinate sn-glycerol 3-phosphate. Glycerol contacts are provided by R84, E85, Y136, D246, and Q247. Residues T268 and G311 each contribute to the ADP site. T268, G311, Q315, and G412 together coordinate ATP. Residues G412 and N416 each contribute to the ADP site.

Belongs to the FGGY kinase family.

The enzyme catalyses glycerol + ATP = sn-glycerol 3-phosphate + ADP + H(+). It participates in polyol metabolism; glycerol degradation via glycerol kinase pathway; sn-glycerol 3-phosphate from glycerol: step 1/1. Inhibited by fructose 1,6-bisphosphate (FBP). In terms of biological role, key enzyme in the regulation of glycerol uptake and metabolism. Catalyzes the phosphorylation of glycerol to yield sn-glycerol 3-phosphate. In Leptospira biflexa serovar Patoc (strain Patoc 1 / Ames), this protein is Glycerol kinase.